The sequence spans 144 residues: Large ribosomal subunit protein uL13 (144 aa).

This sequence belongs to the universal ribosomal protein uL13 family. As to quaternary structure, part of the 50S ribosomal subunit.

This protein is one of the early assembly proteins of the 50S ribosomal subunit, although it is not seen to bind rRNA by itself. It is important during the early stages of 50S assembly. The chain is Large ribosomal subunit protein uL13 from Mycoplasmopsis agalactiae (strain NCTC 10123 / CIP 59.7 / PG2) (Mycoplasma agalactiae).